Consider the following 244-residue polypeptide: Lytic polysaccharide monooxygenase-like protein ANIA_04702 (244 aa).

An N-terminal signal peptide occupies residues Met-1 to Ala-23. His-24 is a Cu(2+) binding site. Residue His-24 is modified to Methylhistidine. Asn-57, Asn-80, Asn-118, Asn-159, Asn-192, and Asn-198 each carry an N-linked (GlcNAc...) asparagine glycan. Intrachain disulfides connect Cys-72–Cys-177 and Cys-142–Cys-196. A lipid anchor (GPI-anchor amidated asparagine) is attached at Asn-215. A propeptide spans Ala-216–Ala-244 (removed in mature form).

It belongs to the X325 family. Cu(2+) is required as a cofactor. Post-translationally, the catalytically essential N-terminal histidine His-24 is post-translationally modified by methylation to prevent protonation of the histidine side chain, and protect the critical active site of the enzyme from oxidative damage.

It is found in the cell membrane. Lytic polysaccharide monooxygenase-like protein that has diverged to biological functions other than polysaccharide degradation since it does not perform oxidative cleavage of polysaccharides. Acts as a cell surface-bound protein that functions in the copper-accumulation pathway. May also act as the major cell wall sensor that regulates MAP kinase-dependent hyphal anastomosis, the fusion of hyphal cells. This chain is Lytic polysaccharide monooxygenase-like protein ANIA_04702, found in Emericella nidulans (strain FGSC A4 / ATCC 38163 / CBS 112.46 / NRRL 194 / M139) (Aspergillus nidulans).